Consider the following 275-residue polypeptide: Undecaprenyl-diphosphatase (275 aa).

The next 7 membrane-spanning stretches (helical) occupy residues 8–28 (WTIVHYFVLGLVQGITEPIPI), 45–65 (ARGLSFEIFVNLASLLAVLII), 92–112 (FMFVVYLVLATIPVGIVGVLF), 119–139 (FIGEDGTTVVGITLLITAAAI), 197–217 (FSFLLYIPVSLGSSILEIPNI), 225–245 (ELWIPYLVAFITAFIASYFAL), and 255–275 (GNLKYFAYYCVIVGVLVLIFL).

Belongs to the UppP family.

Its subcellular location is the cell membrane. It catalyses the reaction di-trans,octa-cis-undecaprenyl diphosphate + H2O = di-trans,octa-cis-undecaprenyl phosphate + phosphate + H(+). Catalyzes the dephosphorylation of undecaprenyl diphosphate (UPP). Confers resistance to bacitracin. The chain is Undecaprenyl-diphosphatase from Oceanobacillus iheyensis (strain DSM 14371 / CIP 107618 / JCM 11309 / KCTC 3954 / HTE831).